Consider the following 81-residue polypeptide: Putative membrane protein insertion efficiency factor (81 aa).

The protein belongs to the UPF0161 family.

Its subcellular location is the cell inner membrane. Its function is as follows. Could be involved in insertion of integral membrane proteins into the membrane. The chain is Putative membrane protein insertion efficiency factor from Thermotoga maritima (strain ATCC 43589 / DSM 3109 / JCM 10099 / NBRC 100826 / MSB8).